The primary structure comprises 277 residues: N-acetylmuramic acid 6-phosphate etherase (277 aa).

Positions 53 to 216 (IIPRVKKGGR…STTIMIELGR (164 aa)) constitute an SIS domain. Glutamate 81 serves as the catalytic Proton donor. Glutamate 112 is an active-site residue.

It belongs to the GCKR-like family. MurNAc-6-P etherase subfamily. As to quaternary structure, homodimer.

The catalysed reaction is N-acetyl-D-muramate 6-phosphate + H2O = N-acetyl-D-glucosamine 6-phosphate + (R)-lactate. It participates in amino-sugar metabolism; N-acetylmuramate degradation. Specifically catalyzes the cleavage of the D-lactyl ether substituent of MurNAc 6-phosphate, producing GlcNAc 6-phosphate and D-lactate. The chain is N-acetylmuramic acid 6-phosphate etherase from Bacteroides thetaiotaomicron (strain ATCC 29148 / DSM 2079 / JCM 5827 / CCUG 10774 / NCTC 10582 / VPI-5482 / E50).